The sequence spans 220 residues: 14-3-3-like protein (220 aa).

It belongs to the 14-3-3 family.

In Spinacia oleracea (Spinach), this protein is 14-3-3-like protein.